The following is a 1293-amino-acid chain: Phosphoribosylformylglycinamidine synthase (1293 aa).

ATP-binding positions include 305-316 (GAATGSGGEIRD) and Ala-676. The disordered stretch occupies residues 305–328 (GAATGSGGEIRDEGATGRGSKPKA). Positions 677, 716, 720, and 884 each coordinate Mg(2+). Ser-886 serves as a coordination point for ATP. Positions 1040–1293 (MAILREQGVN…MFRNARVNLG (254 aa)) constitute a Glutamine amidotransferase type-1 domain. The active-site Nucleophile is Cys-1133. Active-site residues include His-1258 and Glu-1260.

This sequence in the N-terminal section; belongs to the FGAMS family. Monomer.

Its subcellular location is the cytoplasm. It carries out the reaction N(2)-formyl-N(1)-(5-phospho-beta-D-ribosyl)glycinamide + L-glutamine + ATP + H2O = 2-formamido-N(1)-(5-O-phospho-beta-D-ribosyl)acetamidine + L-glutamate + ADP + phosphate + H(+). It functions in the pathway purine metabolism; IMP biosynthesis via de novo pathway; 5-amino-1-(5-phospho-D-ribosyl)imidazole from N(2)-formyl-N(1)-(5-phospho-D-ribosyl)glycinamide: step 1/2. In terms of biological role, phosphoribosylformylglycinamidine synthase involved in the purines biosynthetic pathway. Catalyzes the ATP-dependent conversion of formylglycinamide ribonucleotide (FGAR) and glutamine to yield formylglycinamidine ribonucleotide (FGAM) and glutamate. The sequence is that of Phosphoribosylformylglycinamidine synthase from Shewanella sp. (strain MR-7).